The chain runs to 141 residues: 15 kDa lipoprotein (141 aa).

An N-terminal signal peptide occupies residues 1–17 (MVKRGRFALCLAVLLGA). A lipid anchor (N-palmitoyl cysteine) is attached at cysteine 18. A lipid anchor (S-diacylglycerol cysteine) is attached at cysteine 18.

It is found in the cell membrane. The polypeptide is 15 kDa lipoprotein (tpp15) (Treponema pallidum (strain Nichols)).